A 429-amino-acid polypeptide reads, in one-letter code: MIELDINASDKSLSHRAVIFSLLAKKPCFVRNFLMGGDCLSSLEIAQNLGARVENIAKNSFKITPPWALKEPRKILNCNNSGTSMRLYSGLLSAQKGLFVLSGDNSLNSRPMKRIIEPLKAFGTKILGREDNHFAPLVILGSPLKACDYESPIASAQVKSAFILSALQAQGTSTYRESELSRNHTEIMLKSLGANIKDQDGVLKISPLEKPLEAFDFKIANDPSSAFFFALACAILPKSRLLLKNVLLNPTRIEAFEVLKKMGTHIECVIKSKDLEIIGDIYIEHALLKAITIDQNIASLIDEIPALGIAMLFAKGKSVVKNAKDLRSKESDRIKALISNLKALGIECEEFEDGFYIEGLEDISQLKQRFSQIKPPIIKSFNDHRIAMSFAILTLMLPLEIDNLECANISFPQFKRLLNLFKKGSLHGN.

The 3-phosphoshikimate site is built by Lys-11, Ser-12, and Arg-16. Lys-11 provides a ligand contact to phosphoenolpyruvate. Residues Gly-82 and Arg-110 each coordinate phosphoenolpyruvate. Ser-155, Gln-157, Asp-302, and Lys-329 together coordinate 3-phosphoshikimate. Gln-157 serves as a coordination point for phosphoenolpyruvate. Residue Asp-302 is the Proton acceptor of the active site. Phosphoenolpyruvate is bound by residues Arg-333 and Arg-385.

The protein belongs to the EPSP synthase family. Monomer.

It localises to the cytoplasm. It catalyses the reaction 3-phosphoshikimate + phosphoenolpyruvate = 5-O-(1-carboxyvinyl)-3-phosphoshikimate + phosphate. The protein operates within metabolic intermediate biosynthesis; chorismate biosynthesis; chorismate from D-erythrose 4-phosphate and phosphoenolpyruvate: step 6/7. Functionally, catalyzes the transfer of the enolpyruvyl moiety of phosphoenolpyruvate (PEP) to the 5-hydroxyl of shikimate-3-phosphate (S3P) to produce enolpyruvyl shikimate-3-phosphate and inorganic phosphate. In Helicobacter acinonychis (strain Sheeba), this protein is 3-phosphoshikimate 1-carboxyvinyltransferase.